A 456-amino-acid chain; its full sequence is Probable glycine dehydrogenase (decarboxylating) subunit 1 (456 aa).

It belongs to the GcvP family. N-terminal subunit subfamily. As to quaternary structure, the glycine cleavage system is composed of four proteins: P, T, L and H. In this organism, the P 'protein' is a heterodimer of two subunits.

It carries out the reaction N(6)-[(R)-lipoyl]-L-lysyl-[glycine-cleavage complex H protein] + glycine + H(+) = N(6)-[(R)-S(8)-aminomethyldihydrolipoyl]-L-lysyl-[glycine-cleavage complex H protein] + CO2. In terms of biological role, the glycine cleavage system catalyzes the degradation of glycine. The P protein binds the alpha-amino group of glycine through its pyridoxal phosphate cofactor; CO(2) is released and the remaining methylamine moiety is then transferred to the lipoamide cofactor of the H protein. The sequence is that of Probable glycine dehydrogenase (decarboxylating) subunit 1 from Legionella pneumophila (strain Lens).